Consider the following 158-residue polypeptide: Endoribonuclease YbeY (158 aa).

3 residues coordinate Zn(2+): His120, His124, and His130.

Belongs to the endoribonuclease YbeY family. Zn(2+) serves as cofactor.

It localises to the cytoplasm. In terms of biological role, single strand-specific metallo-endoribonuclease involved in late-stage 70S ribosome quality control and in maturation of the 3' terminus of the 16S rRNA. This Spiroplasma citri protein is Endoribonuclease YbeY.